The primary structure comprises 172 residues: MAKFQAKSQNDAPDDGLKEKMIAVNRVTKVVKGGRILGFAALTVVGDGDGRVGMGKGKSKEVPAAVQKAMEEARRNMTKVSLKNGTIHHNVFGHWGAANVMMAPAPKGTGIIAGGPMRAVFEVMGITDIVAKSHGSSNPYNMVRATMDALNNSTTASEIAAKRGKSVEEIFG.

An S5 DRBM domain is found at 17 to 80; it reads LKEKMIAVNR…EEARRNMTKV (64 aa).

Belongs to the universal ribosomal protein uS5 family. As to quaternary structure, part of the 30S ribosomal subunit. Contacts proteins S4 and S8.

Functionally, with S4 and S12 plays an important role in translational accuracy. Located at the back of the 30S subunit body where it stabilizes the conformation of the head with respect to the body. This is Small ribosomal subunit protein uS5 from Polaromonas sp. (strain JS666 / ATCC BAA-500).